The following is a 609-amino-acid chain: Cationic amino acid transporter 3, mitochondrial (609 aa).

The N-terminal 14 residues, 1–14, are a transit peptide targeting the mitochondrion; it reads MGCLRSLVRRKQFD. The next 14 membrane-spanning stretches (helical) occupy residues 38–58, 66–86, 104–124, 161–181, 190–210, 226–246, 270–290, 314–334, 361–381, 388–408, 474–494, 499–519, 534–554, and 558–578; these read LIAIGVGSTIGAGVYILVGTV, ALALSFLIAGISAALSAFCYA, ICIGEGVAWLIGWALILEYTI, IVVDPCAAVLVFIVTGLCCLG, GIVTTANVFVMIFVIVAGSYL, FPYGVDGMLTGSATVFFAYIG, ISLLLCCLLYMMVSVVIVGLV, AYLINLGAVMALCSALMGSIL, QVPINGTITTGVCAAILAFFM, GMVSVGTLVAFTMVAISLLIV, IMFTCIGNFLLSYAASSFLLP, YSLCGVGGLFLLVGLIVLICI, FICPFVPLLPIVCILINMYLL, and GAATWVRVSVWLFLGVVVYIF.

It belongs to the amino acid-polyamine-organocation (APC) superfamily. Cationic amino acid transporter (CAT) (TC 2.A.3.3) family. As to expression, expressed in roots, stems, flowers, and leaves.

It localises to the mitochondrion membrane. Its function is as follows. Permease involved in the transport of the cationic neutral or acidic amino acids. The polypeptide is Cationic amino acid transporter 3, mitochondrial (CAT3) (Arabidopsis thaliana (Mouse-ear cress)).